We begin with the raw amino-acid sequence, 382 residues long: uncharacterized protein (382 aa).

Helical transmembrane passes span 8-28 (VLLL…LNTL), 41-61 (WQVG…TLIA), 73-93 (SYHC…LTVD), 94-114 (FWSW…IWVI), 133-153 (AAYM…LGIV), 157-177 (LLSV…PLLF), 208-228 (GCII…LYLS), 235-255 (ASVG…QWPM), 274-294 (VVIL…ALFI), 325-345 (ALLM…SLLM), and 349-369 (SDNL…MMLL).

It belongs to the major facilitator superfamily. YcaD (TC 2.A.1.26) family.

It localises to the cell inner membrane. This is an uncharacterized protein from Yersinia pseudotuberculosis serotype IB (strain PB1/+).